The sequence spans 206 residues: Methylthioribulose-1-phosphate dehydratase (206 aa).

Positions 96 and 98 each coordinate Zn(2+).

This sequence belongs to the aldolase class II family. MtnB subfamily. Requires Zn(2+) as cofactor.

The catalysed reaction is 5-(methylsulfanyl)-D-ribulose 1-phosphate = 5-methylsulfanyl-2,3-dioxopentyl phosphate + H2O. The protein operates within amino-acid biosynthesis; L-methionine biosynthesis via salvage pathway; L-methionine from S-methyl-5-thio-alpha-D-ribose 1-phosphate: step 2/6. In terms of biological role, catalyzes the dehydration of methylthioribulose-1-phosphate (MTRu-1-P) into 2,3-diketo-5-methylthiopentyl-1-phosphate (DK-MTP-1-P). This chain is Methylthioribulose-1-phosphate dehydratase, found in Azotobacter vinelandii (strain DJ / ATCC BAA-1303).